Here is a 532-residue protein sequence, read N- to C-terminus: Bifunctional purine biosynthesis protein PurH (532 aa).

Residues 1 to 148 (MQTPKPIKRA…KNHKDVTIVV (148 aa)) enclose the MGS-like domain.

This sequence belongs to the PurH family.

It catalyses the reaction (6R)-10-formyltetrahydrofolate + 5-amino-1-(5-phospho-beta-D-ribosyl)imidazole-4-carboxamide = 5-formamido-1-(5-phospho-D-ribosyl)imidazole-4-carboxamide + (6S)-5,6,7,8-tetrahydrofolate. It carries out the reaction IMP + H2O = 5-formamido-1-(5-phospho-D-ribosyl)imidazole-4-carboxamide. Its pathway is purine metabolism; IMP biosynthesis via de novo pathway; 5-formamido-1-(5-phospho-D-ribosyl)imidazole-4-carboxamide from 5-amino-1-(5-phospho-D-ribosyl)imidazole-4-carboxamide (10-formyl THF route): step 1/1. It functions in the pathway purine metabolism; IMP biosynthesis via de novo pathway; IMP from 5-formamido-1-(5-phospho-D-ribosyl)imidazole-4-carboxamide: step 1/1. The chain is Bifunctional purine biosynthesis protein PurH from Alteromonas mediterranea (strain DSM 17117 / CIP 110805 / LMG 28347 / Deep ecotype).